The sequence spans 94 residues: Alpha-conotoxin Ms20.3 (94 aa).

A signal peptide spans Met-1 to Gly-24. The propeptide occupies Gln-25–Arg-45. A 4-carboxyglutamate modification is found at Glu-49. Pro-55 is subject to 4-hydroxyproline. 4 cysteine pairs are disulfide-bonded: Cys-63/Cys-72, Cys-68/Cys-80, Cys-73/Cys-90, and Cys-78/Cys-92.

This sequence belongs to the conotoxin D superfamily. In terms of assembly, hetero-, homo- or pseudo-homodimer (identical sequence, different post-translational modifications). Homodimer of [carboxyGlu-49, hydroxyPro-55]Ms20.3, and heterodimer of [carboxyGlu-49, hydroxyPro-55]Ms20.3 and [carboxy'Glu-50', hydroxy'Pro-56']Ms20.5 may exist. In terms of tissue distribution, expressed by the venom duct.

The protein localises to the secreted. Alpha-D-conopeptides act on postsynaptic membranes, they bind to the nicotinic acetylcholine receptors (nAChR) and thus inhibit them. Through its two C-terminal domains, this homodimeric protein would bind to two nAChR allosteric sites, located outside the nAChR C-loop of the principal binding face and at the adjacent binding interface in a clockwise direction. This toxin specifically blocks mammalian neuronal nAChR of the alpha-7/CHRNA7 (IC(50)=0.12 nM), alpha-3-beta-2/CHRNA3-CHRNB2 (IC(50)=1.08 nM), and alpha-4-beta-2/CHRNA4-CHRNB2 (IC(50)=4.5 nM) subtypes. Has no effect on alpha-3-beta-4/CHRNA3-CHRNB4, alpha-4-beta-4/CHRNA4-CHRNB4 and alpha-1-beta-1-epsilon-delta/CHRNA1-CHRNB1-CHRNE-CHRND subtypes of nAChRs. In Conus mustelinus (Weasel cone), this protein is Alpha-conotoxin Ms20.3.